Reading from the N-terminus, the 84-residue chain is FMRFamide-like neuropeptides 26 (84 aa).

The N-terminal stretch at 1–19 (MKVMFMLALLFSSLVATSA) is a signal peptide. Residues 20-48 (FRLPFQFFGANEDFNSGLTKRNYYESKPY) constitute a propeptide that is removed on maturation. Phenylalanine amide is present on residues phenylalanine 61 and phenylalanine 82.

It belongs to the FARP (FMRFamide related peptide) family. As to expression, each flp gene is expressed in a distinct set of neurons.

Its subcellular location is the secreted. In terms of biological role, FMRFamides and FMRFamide-like peptides are neuropeptides. The chain is FMRFamide-like neuropeptides 26 from Caenorhabditis elegans.